Here is an 880-residue protein sequence, read N- to C-terminus: DNA polymerase I (880 aa).

Residues 174 to 268 enclose the 5'-3' exonuclease domain; sequence TPEQIIDMKG…SGLEYQGFNR (95 aa). Residues 302–470 enclose the 3'-5' exonuclease domain; that stretch reads DINVKTVTDV…LREKLVQELE (169 aa).

It belongs to the DNA polymerase type-A family. As to quaternary structure, single-chain monomer with multiple functions.

The enzyme catalyses DNA(n) + a 2'-deoxyribonucleoside 5'-triphosphate = DNA(n+1) + diphosphate. Its function is as follows. In addition to polymerase activity, this DNA polymerase exhibits 3'-5' and 5'-3' exonuclease activity. In Bacillus subtilis (strain 168), this protein is DNA polymerase I (polA).